The sequence spans 382 residues: Ustilagic acid biosynthesis cluster protein orf2 (382 aa).

The span at 1-20 shows a compositional bias: polar residues; the sequence is MLQEAKVSTHTSNPLSQSVP. A disordered region spans residues 1 to 22; sequence MLQEAKVSTHTSNPLSQSVPQY.

Its pathway is secondary metabolite biosynthesis. Part of the gene cluster that mediates the biosynthesis of the glycolipid biosurfactant ustilagic acid (UA). UA is a secreted cellobiose glycolipid that is toxic for many microorganisms and confers biocontrol activity to U.maydis. UA consists of 15,16-dihydroxypalmitic or 2,15,16-trihydroxypalmitic acid, which is O-glycosidically linked to cellobiose at its terminal hydroxyl group. In addition, the cellobiose moiety is acetylated and acylated with a short-chain hydroxy fatty acid. UA biosynthesis starts with omega-hydroxylation of palmitic acid catalyzed by the cytochrome P450 monooxygenase cyp1. Terminal hydroxylation of palmitic acid precedes subterminal hydroxylation catalyzed by the cytochrome P450 monooxygenase cyp2. Sequential glucosylation of the hydroxy fatty acid is probably catalyzed by the glycosyltransferase ugt1. The cellobiose lipid is further decorated by acetylation of the proximal glucose residue and by acylation with a short-chain beta-hydroxy fatty acid at the distal glucose residue. The acyltransferase uat1 may be a good candidate for catalyzing either acetylation or acylation of the cellobiose lipid. The fatty acid synthase fas2 may be involved in synthesis of the carbon backbone of the short-chain beta-hydroxy fatty acid esterified to the cellobiose disaccharide. The secreted UA consists of a mixture of both alpha-hydroxylated and non-hydroxylated glycolipids; therefore, alpha-hydroxylation of the long-chain fatty, catalyzed by the fatty acid hydroxylase ahd1, occurs late in UA biosynthesis and may be the last step before secretion. The sequence is that of Ustilagic acid biosynthesis cluster protein orf2 from Mycosarcoma maydis (Corn smut fungus).